Reading from the N-terminus, the 222-residue chain is Millepora cytotoxin-1 (222 aa).

Positions 1 to 20 (MVTLYLHVPILLLVVITARA) are cleaved as a signal peptide. The propeptide occupies 21–75 (APKPDTHNPFDELSSVAEKQDLHYGDRSRKDPFIAQNDVGNNFRDGTQENLTKVR). 3 cysteine pairs are disulfide-bonded: C89-C115, C142-C168, and C179-C222. Repeats lie at residues 100–109 (SIHDNHYEDR), 153–162 (SIHDNYYEDR), and 206–215 (SQHNNYYEDR).

The protein belongs to the dermatopontin family. In terms of processing, is not glycosylated.

The protein localises to the secreted. It is found in the nematocyst. Its function is as follows. Is potently cytotoxic (EC(50) value 79 ng/mL) towards L1210 mouse leukemia cells, has hemagglutination activity on sheep erythrocytes, and is lethal in crayfish. Has no phospholipase A2 activity. The protein is Millepora cytotoxin-1 of Millepora dichotoma (Net fire coral).